A 387-amino-acid chain; its full sequence is Mannitol-1-phosphate 5-dehydrogenase (387 aa).

Residue 3-14 coordinates NAD(+); it reads ALHFGAGNIGRG.

Belongs to the mannitol dehydrogenase family.

It carries out the reaction D-mannitol 1-phosphate + NAD(+) = beta-D-fructose 6-phosphate + NADH + H(+). In Yersinia pseudotuberculosis serotype IB (strain PB1/+), this protein is Mannitol-1-phosphate 5-dehydrogenase.